Consider the following 787-residue polypeptide: Integrin beta-3 (787 aa).

The first 25 residues, 1–25, serve as a signal peptide directing secretion; the sequence is MRAQWPGQLWAALLALGALAGVVVG. Residues 26–717 lie on the Extracellular side of the membrane; that stretch reads ESNICTTRGV…EEPECPKGPD (692 aa). Positions 29-75 constitute a PSI domain; the sequence is ICTTRGVNSCQQCLAVSPVCAWCSDETLSQGSPRCNLKENLLKDNCA. 19 disulfide bridges follow: cysteine 30-cysteine 48, cysteine 38-cysteine 460, cysteine 41-cysteine 63, cysteine 51-cysteine 74, cysteine 202-cysteine 209, cysteine 257-cysteine 298, cysteine 399-cysteine 411, cysteine 431-cysteine 458, cysteine 462-cysteine 482, cysteine 473-cysteine 485, cysteine 487-cysteine 496, cysteine 498-cysteine 528, cysteine 511-cysteine 526, cysteine 520-cysteine 531, cysteine 533-cysteine 546, cysteine 548-cysteine 569, cysteine 553-cysteine 567, cysteine 561-cysteine 572, and cysteine 574-cysteine 583. Residues 134 to 376 form the VWFA domain; the sequence is DYPVDIYYLM…QLIVDAYGKI (243 aa). Residues serine 146 and serine 148 each contribute to the Mg(2+) site. The Ca(2+) site is built by serine 148, aspartate 151, aspartate 152, and aspartate 183. The CX3CL1-binding stretch occupies residues 202 to 209; sequence CYNMKNAC. Residues 202–209 are involved in CX3CL1-, NRG1-, FGF1- and IGF1-binding; that stretch reads CYNMKNAC. 5 residues coordinate Ca(2+): asparagine 240, aspartate 242, proline 244, glutamate 245, and aspartate 276. Position 245 (glutamate 245) interacts with Mg(2+). The tract at residues 292–312 is CX3CL1-binding; sequence LPNDGHCHIGTDNHYSASTTM. Asparagine 345 and asparagine 396 each carry an N-linked (GlcNAc...) asparagine glycan. I-EGF domains follow at residues 462–497, 498–547, 548–584, and 585–624; these read CQAF…SMCE, CSEE…KYCE, CDDF…YYCN, and CTTR…DTCE. A glycan (N-linked (GlcNAc...) asparagine) is linked at asparagine 477. N-linked (GlcNAc...) asparagine glycosylation occurs at asparagine 584. 9 disulfides stabilise this stretch: cysteine 585–cysteine 608, cysteine 592–cysteine 606, cysteine 600–cysteine 611, cysteine 613–cysteine 623, cysteine 626–cysteine 629, cysteine 633–cysteine 680, cysteine 639–cysteine 660, cysteine 642–cysteine 656, and cysteine 688–cysteine 712. An N-linked (GlcNAc...) asparagine glycan is attached at asparagine 679. Residues 718 to 740 form a helical membrane-spanning segment; it reads ILVVLLSVMGAILLIGLATLLIW. At 741–787 the chain is on the cytoplasmic side; sequence KLLITIHDRKEFAKFEEERARAKWDTANNPLYKEATSTFTNITYRGT. A Phosphothreonine modification is found at threonine 766. Tyrosine 772 is subject to Phosphotyrosine. Positions 776–782 match the LIR motif; that stretch reads TSTFTNI. Threonine 778 bears the Phosphothreonine mark. Tyrosine 784 bears the Phosphotyrosine mark.

Belongs to the integrin beta chain family. As to quaternary structure, heterodimer of an alpha and a beta subunit. Beta-3 (ITGB3) associates with either alpha-IIB (ITGA2B) or alpha-V (ITGAV). Interacts with FLNB and COMP. Interacts with PDIA6 following platelet stimulation. Interacts with SYK; upon activation by ITGB3 promotes platelet adhesion. Interacts with MYO10. Interacts with DAB2. Interacts with FERMT2. Integrin ITGAV:ITGB3 interacts with FBLN5 (via N-terminus). Interacts with EMP2; regulates the levels of the heterodimer ITGA5:ITGB3 integrin expression on the plasma membrane. ITGAV:ITGB3 interacts with CCN3. ITGAV:ITGB3 and ITGA2B:ITGB3 interact with SELP (via C-type lectin domain); the interaction mediates cell-cell interaction and adhesion. ITGAV:ITGB3 interacts with AGRA2. ITGAV:ITGB3 is found in a ternary complex with CX3CR1 and CX3CL1. ITGAV:ITGB3 is found in a ternary complex with NRG1 and ERBB3. ITGAV:ITGB3 is found in a ternary complex with FGF1 and FGFR1. ITGAV:ITGB3 interacts with FGF2; it is likely that FGF2 can simultaneously bind ITGAV:ITGB3 and FGF receptors. ITGAV:ITGB3 binds to IL1B. ITGAV:ITGB3 is found in a ternary complex with IGF1 and IGF1R. ITGAV:ITGB3 interacts with IGF2. ITGAV:ITGB3 interacts with FBN1. ITGAV:ITGB3 interacts with CD9, CD81 and CD151 (via second extracellular domain). Interacts (via the allosteric site (site 2)) with CXCL12 in a CXCR4-independent manner. Interacts with MXRA8/DICAM; the interaction inhibits ITGAV:ITGB3 heterodimer formation. ITGAV:ITGB3 interacts with PTN. Forms a complex with PTPRZ1 and PTN that stimulates endothelial cell migration through ITGB3 Tyr-772 phosphorylation. ITGAV:ITGB3 interacts with SLC6A4. Interacts with SLC6A4 (via C-terminus); this interaction regulates SLC6A4 trafficking. ITGA2B:ITGB3 interacts with PPIA/CYPA; the interaction is ROS and PPIase activity-dependent and is increased in the presence of thrombin. Interacts with tensin TNS3; TNS3 also interacts with PEAK1, thus acting as an adapter molecule to bridge the association of PEAK1 with ITGB3. Interacts with TM4SF19. In terms of processing, phosphorylated on tyrosine residues in response to thrombin-induced platelet aggregation. Probably involved in outside-in signaling.

Its subcellular location is the cell membrane. The protein resides in the cell projection. It is found in the lamellipodium membrane. The protein localises to the cell junction. It localises to the focal adhesion. Its subcellular location is the postsynaptic cell membrane. The protein resides in the synapse. Integrin alpha-V/beta-3 (ITGAV:ITGB3) is a receptor for cytotactin, fibronectin, laminin, matrix metalloproteinase-2, osteopontin, osteomodulin, prothrombin, thrombospondin, vitronectin and von Willebrand factor. Integrin alpha-IIB/beta-3 (ITGA2B:ITGB3) is a receptor for fibronectin, fibrinogen, plasminogen, prothrombin, thrombospondin and vitronectin. Integrins alpha-IIB/beta-3 and alpha-V/beta-3 recognize the sequence R-G-D in a wide array of ligands. Integrin alpha-IIB/beta-3 recognizes the sequence H-H-L-G-G-G-A-K-Q-A-G-D-V in fibrinogen gamma chain. Following activation integrin alpha-IIB/beta-3 brings about platelet/platelet interaction through binding of soluble fibrinogen. This step leads to rapid platelet aggregation which physically plugs ruptured endothelial surfaces. Fibrinogen binding enhances SELP expression in activated platelets. ITGAV:ITGB3 binds to fractalkine (CX3CL1) and acts as its coreceptor in CX3CR1-dependent fractalkine signaling. ITGAV:ITGB3 binds to NRG1 (via EGF domain) and this binding is essential for NRG1-ERBB signaling. ITGAV:ITGB3 binds to FGF1 and this binding is essential for FGF1 signaling. ITGAV:ITGB3 binds to FGF2 and this binding is essential for FGF2 signaling. ITGAV:ITGB3 binds to IGF1 and this binding is essential for IGF1 signaling. ITGAV:ITGB3 binds to IGF2 and this binding is essential for IGF2 signaling. ITGAV:ITGB3 binds to IL1B and this binding is essential for IL1B signaling. ITGAV:ITGB3 binds to PLA2G2A via a site (site 2) which is distinct from the classical ligand-binding site (site 1) and this induces integrin conformational changes and enhanced ligand binding to site 1. ITGAV:ITGB3 acts as a receptor for fibrillin-1 (FBN1) and mediates R-G-D-dependent cell adhesion to FBN1. ITGAV:ITGB3 binds to the Lilrb4a/Gp49b receptor and enhances the Lilrb4a-mediated inhibition of mast cell activation. ITGAV:ITGB3 also suppresses marginal zone B cell antibody production through its interaction with Lilrb4a. In brain, plays a role in synaptic transmission and plasticity. Involved in the regulation of the serotonin neurotransmission, is required to localize to specific compartments within the synapse the serotonin receptor SLC6A4 and for an appropriate reuptake of serotonin. Controls excitatory synaptic strength by regulating GRIA2-containing AMPAR endocytosis, which affects AMPAR abundance and composition. ITGAV:ITGB3 act as a receptor for CD40LG. ITGAV:ITGB3 acts as a receptor for IBSP and promotes cell adhesion and migration to IBSP. This Mus musculus (Mouse) protein is Integrin beta-3.